A 678-amino-acid polypeptide reads, in one-letter code: UvrABC system protein B (678 aa).

Positions 35–422 (EGVSDGLMFQ…ADNVVEQVVR (388 aa)) constitute a Helicase ATP-binding domain. 48-55 (GVTGSGKT) lines the ATP pocket. Positions 101–124 (YYDYYQPEAYVPTRDLFIEKDSSI) match the Beta-hairpin motif. Positions 439 to 605 (QVDDLLGEIH…GVSKAVRELI (167 aa)) constitute a Helicase C-terminal domain. The UVR domain occupies 633–668 (AREIRRLEKLMMDHARNLEFEQAAAARDALNALKSR).

This sequence belongs to the UvrB family. As to quaternary structure, forms a heterotetramer with UvrA during the search for lesions. Interacts with UvrC in an incision complex.

It localises to the cytoplasm. In terms of biological role, the UvrABC repair system catalyzes the recognition and processing of DNA lesions. A damage recognition complex composed of 2 UvrA and 2 UvrB subunits scans DNA for abnormalities. Upon binding of the UvrA(2)B(2) complex to a putative damaged site, the DNA wraps around one UvrB monomer. DNA wrap is dependent on ATP binding by UvrB and probably causes local melting of the DNA helix, facilitating insertion of UvrB beta-hairpin between the DNA strands. Then UvrB probes one DNA strand for the presence of a lesion. If a lesion is found the UvrA subunits dissociate and the UvrB-DNA preincision complex is formed. This complex is subsequently bound by UvrC and the second UvrB is released. If no lesion is found, the DNA wraps around the other UvrB subunit that will check the other stand for damage. The polypeptide is UvrABC system protein B (Bordetella pertussis (strain Tohama I / ATCC BAA-589 / NCTC 13251)).